Consider the following 388-residue polypeptide: Spermidine/putrescine import ATP-binding protein PotA (388 aa).

Positions 17 to 247 (IEIDHVTKRF…PATVFVANFI (231 aa)) constitute an ABC transporter domain. 49-56 (GPSGCGKT) lines the ATP pocket.

It belongs to the ABC transporter superfamily. Spermidine/putrescine importer (TC 3.A.1.11.1) family. In terms of assembly, the complex is composed of two ATP-binding proteins (PotA), two transmembrane proteins (PotB and PotC) and a solute-binding protein (PotD).

The protein localises to the cell membrane. It carries out the reaction ATP + H2O + polyamine-[polyamine-binding protein]Side 1 = ADP + phosphate + polyamineSide 2 + [polyamine-binding protein]Side 1.. In terms of biological role, part of the ABC transporter complex PotABCD involved in spermidine/putrescine import. Responsible for energy coupling to the transport system. The polypeptide is Spermidine/putrescine import ATP-binding protein PotA (Mycobacterium sp. (strain KMS)).